The sequence spans 663 residues: Transketolase 2 (663 aa).

Substrate is bound at residue His25. Residues His65 and 113–115 (GPL) each bind thiamine diphosphate. Mg(2+) is bound at residue Asp154. Thiamine diphosphate is bound by residues Gly155 and Asn184. 2 residues coordinate Mg(2+): Asn184 and Ile186. Substrate is bound by residues His259, Arg356, and Ser383. Residue His259 participates in thiamine diphosphate binding. The Proton donor role is filled by Glu410. Phe436 contacts thiamine diphosphate. Substrate contacts are provided by His460, Asp468, and Arg519.

This sequence belongs to the transketolase family. In terms of assembly, homodimer. Mg(2+) is required as a cofactor. It depends on Ca(2+) as a cofactor. The cofactor is Mn(2+). Co(2+) serves as cofactor. Requires thiamine diphosphate as cofactor.

The enzyme catalyses D-sedoheptulose 7-phosphate + D-glyceraldehyde 3-phosphate = aldehydo-D-ribose 5-phosphate + D-xylulose 5-phosphate. Functionally, catalyzes the transfer of a two-carbon ketol group from a ketose donor to an aldose acceptor, via a covalent intermediate with the cofactor thiamine pyrophosphate. The chain is Transketolase 2 (tkt2) from Aliivibrio fischeri (strain ATCC 700601 / ES114) (Vibrio fischeri).